The chain runs to 232 residues: GDT1-like protein 5 (232 aa).

The next 6 membrane-spanning stretches (helical) occupy residues leucine 13–alanine 33, leucine 40–glycine 60, threonine 72–phenylalanine 92, proline 135–glycine 155, phenylalanine 175–glycine 195, and methionine 207–glycine 227.

The protein belongs to the GDT1 family.

It localises to the membrane. This chain is GDT1-like protein 5, found in Oryza sativa subsp. japonica (Rice).